Here is a 1131-residue protein sequence, read N- to C-terminus: Activity-dependent neuroprotector homeobox protein 2 (1131 aa).

The C2H2-type 1 zinc finger occupies Tyr-73–His-96. A C2H2-type 2; degenerate zinc finger spans residues Ile-106–His-128. Residues Lys-118 and Lys-146 each participate in a glycyl lysine isopeptide (Lys-Gly) (interchain with G-Cter in SUMO2) cross-link. The C2H2-type 3; degenerate zinc finger occupies Phe-155–His-178. Residues Tyr-215–His-240 form a C2H2-type 4 zinc finger. Residues Leu-274–Ala-285 are compositionally biased toward low complexity. A disordered region spans residues Leu-274 to Ser-329. The C2H2-type 5; degenerate zinc-finger motif lies at Lys-694–His-716. The C2H2-type 6; degenerate zinc finger occupies Val-747–His-768. 2 consecutive C2H2-type zinc fingers follow at residues Leu-770 to His-793 and Ser-875 to His-898. A C2H2-type 9; degenerate zinc finger spans residues Phe-913 to Arg-937. Glycyl lysine isopeptide (Lys-Gly) (interchain with G-Cter in SUMO2) cross-links involve residues Lys-979 and Lys-1018. Position 1024 is a phosphoserine (Ser-1024). Lys-1032 participates in a covalent cross-link: Glycyl lysine isopeptide (Lys-Gly) (interchain with G-Cter in SUMO1); alternate. Lys-1032 is covalently cross-linked (Glycyl lysine isopeptide (Lys-Gly) (interchain with G-Cter in SUMO2); alternate). A DNA-binding region (homeobox) is located at residues Pro-1043 to Ile-1102.

This sequence belongs to the krueppel C2H2-type zinc-finger protein family. May interact with SMARCA4/BRG1.

The protein resides in the nucleus. In terms of biological role, may be involved in transcriptional regulation. May play a role in neuronal function; perhaps involved in protection of brain tissues from oxidative stress. May be involved in erythroid differentiation. This Homo sapiens (Human) protein is Activity-dependent neuroprotector homeobox protein 2 (ADNP2).